Here is an 886-residue protein sequence, read N- to C-terminus: Extended synaptotagmin-3 (886 aa).

The tract at residues 1 to 21 is disordered; the sequence is MRAEEPCAPGAPSALGAQRTP. Over 1 to 29 the chain is Cytoplasmic; sequence MRAEEPCAPGAPSALGAQRTPGPELRLSS. The next 2 helical transmembrane spans lie at 30–50 and 51–71; these read QLLP…GPVY and LAGY…LWMW. The Cytoplasmic portion of the chain corresponds to 72 to 886; that stretch reads WRRNRRGKLG…ELTPNGQPRS (815 aa). The SMP-LTD domain occupies 114 to 291; that stretch reads DVERVEWANK…LPNRVTVPVK (178 aa). C2 domains are found at residues 291-408 and 426-566; these read KKGL…DEWF and SLLT…QLDH. Residues lysine 321, aspartate 322, aspartate 332, aspartate 379, glutamate 380, aspartate 381, aspartate 383, aspartate 385, and aspartate 386 each contribute to the Ca(2+) site. Positions 613–673 are disordered; the sequence is QGPKAQPQEE…PEPKGKDSAK (61 aa). Low complexity predominate over residues 642 to 659; that stretch reads RSTTTTTSATTVATEPTS. Residues 664 to 673 show a composition bias toward basic and acidic residues; it reads PEPKGKDSAK. The region spanning 754–876 is the C2 3 domain; that stretch reads QLGEIQLTVR…DLIKGFSQWY (123 aa). The segment at 801–808 is required for phosphatidylinositol 4,5-bisphosphate-dependent location at the cell membrane; it reads RKWACRKK.

It belongs to the extended synaptotagmin family. Interacts with ESYT1 and ESYT2. In terms of tissue distribution, widely expressed with high level in cerebellum and skin.

The protein localises to the cell membrane. It is found in the endoplasmic reticulum membrane. Functionally, binds glycerophospholipids in a barrel-like domain and may play a role in cellular lipid transport. Tethers the endoplasmic reticulum to the cell membrane and promotes the formation of appositions between the endoplasmic reticulum and the cell membrane. This chain is Extended synaptotagmin-3, found in Homo sapiens (Human).